The sequence spans 296 residues: Probable lipid kinase YegS-like (296 aa).

A DAGKc domain is found at 1–130 (MPHTLLILNG…IDLAQVNGEH (130 aa)). ATP is bound by residues threonine 37, 63–69 (GDGTINE), and threonine 92. Mg(2+)-binding residues include leucine 212, aspartate 215, and leucine 217. Glutamate 268 (proton acceptor) is an active-site residue.

This sequence belongs to the diacylglycerol/lipid kinase family. YegS lipid kinase subfamily. Requires Mg(2+) as cofactor. Ca(2+) serves as cofactor.

Its subcellular location is the cytoplasm. Its function is as follows. Probably phosphorylates lipids; the in vivo substrate is unknown. The polypeptide is Probable lipid kinase YegS-like (Yersinia pestis bv. Antiqua (strain Angola)).